An 88-amino-acid chain; its full sequence is Large ribosomal subunit protein bL27 (88 aa).

The interval 1 to 25 is disordered; that stretch reads MAHKKGASSSRNGRDSNAQRLGVKR. Polar residues predominate over residues 7 to 19; the sequence is ASSSRNGRDSNAQ.

This sequence belongs to the bacterial ribosomal protein bL27 family.

This chain is Large ribosomal subunit protein bL27, found in Nocardia farcinica (strain IFM 10152).